The sequence spans 117 residues: UPF0122 protein TTE1463 (117 aa).

This sequence belongs to the UPF0122 family.

Functionally, might take part in the signal recognition particle (SRP) pathway. This is inferred from the conservation of its genetic proximity to ftsY/ffh. May be a regulatory protein. The polypeptide is UPF0122 protein TTE1463 (Caldanaerobacter subterraneus subsp. tengcongensis (strain DSM 15242 / JCM 11007 / NBRC 100824 / MB4) (Thermoanaerobacter tengcongensis)).